Consider the following 461-residue polypeptide: Ribulose bisphosphate carboxylase (461 aa).

Asn-112 is a binding site for substrate. Catalysis depends on Lys-167, which acts as the Proton acceptor. Position 169 (Lys-169) interacts with substrate. The Mg(2+) site is built by Lys-192, Asp-194, and Glu-195. Position 192 is an N6-carboxylysine (Lys-192). His-288 acts as the Proton acceptor in catalysis. Substrate is bound by residues Arg-289, His-322, and Ser-369.

Belongs to the RuBisCO large chain family. Type II subfamily. As to quaternary structure, homodimer. Requires Mg(2+) as cofactor.

The catalysed reaction is 2 (2R)-3-phosphoglycerate + 2 H(+) = D-ribulose 1,5-bisphosphate + CO2 + H2O. It carries out the reaction D-ribulose 1,5-bisphosphate + O2 = 2-phosphoglycolate + (2R)-3-phosphoglycerate + 2 H(+). RuBisCO catalyzes two reactions: the carboxylation of D-ribulose 1,5-bisphosphate, the primary event in carbon dioxide fixation, as well as the oxidative fragmentation of the pentose substrate. Both reactions occur simultaneously and in competition at the same active site. This chain is Ribulose bisphosphate carboxylase, found in Rhodopseudomonas palustris (strain HaA2).